We begin with the raw amino-acid sequence, 158 residues long: Large ribosomal subunit protein uL11 (158 aa).

It belongs to the universal ribosomal protein uL11 family. As to quaternary structure, part of the ribosomal stalk of the 50S ribosomal subunit. Interacts with L10 and the large rRNA to form the base of the stalk. L10 forms an elongated spine to which L12 dimers bind in a sequential fashion forming a multimeric L10(L12)X complex.

Forms part of the ribosomal stalk which helps the ribosome interact with GTP-bound translation factors. This chain is Large ribosomal subunit protein uL11, found in Methanospirillum hungatei JF-1 (strain ATCC 27890 / DSM 864 / NBRC 100397 / JF-1).